Consider the following 160-residue polypeptide: Ribosomal RNA large subunit methyltransferase H (160 aa).

Residues Leu-77, Gly-109, and 128–133 (FGRITL) each bind S-adenosyl-L-methionine.

The protein belongs to the RNA methyltransferase RlmH family. As to quaternary structure, homodimer.

It is found in the cytoplasm. It carries out the reaction pseudouridine(1915) in 23S rRNA + S-adenosyl-L-methionine = N(3)-methylpseudouridine(1915) in 23S rRNA + S-adenosyl-L-homocysteine + H(+). Its function is as follows. Specifically methylates the pseudouridine at position 1915 (m3Psi1915) in 23S rRNA. The chain is Ribosomal RNA large subunit methyltransferase H from Oenococcus oeni (strain ATCC BAA-331 / PSU-1).